The chain runs to 1804 residues: MKAGSGDQGSPPCFLRFPRPVRVVSGAEAELKCVVLGEPPPTVVWEKGGQQLVASERLSFPEDGAEHGLLLSGALPTDAGVYVCRARNAAGEAYAAAAVTVLEPPAPEPEPESSECPLPTPGTGEGAPKFLTGPQSQWVLRGEEVVLTCQVGGLPEPKLYWEKDGMALDEVWDSSHFKLEPGRGASDEGASLTLRILAARLPDSGVYVCHARNAHGHAQAGALLQVHQPRESPPQDPDENPKPVLEPLKGAPKTFWVNEGKHAKFRCYVMGKPEPEIEWHLEGRPLLPDRRRLMYRDRDGGFVLKVLYCQAKDRGLYVCAARNSAGQTLSAVQLHVKEPRLRFTRPLQDVEGREHGIVVLECKVPNSRIPTAWFREDQRLLPCRKYEQIEEGAVRRLVIHKLKADDDGVYLCEMRGRVRTVANVTVKGPILKRLPRKLDVLEGENAVLLVETQEAGVQGCWSRDGEDLPDTCQSSCGHMHALVLPGVTREDAGEITFSLGNSRTTTLLRVKCVKHSPPGPPVMVEMFKGQKNKVLLTWKPPEPPPETSFIYRLERQEVGSDDWIQCFSIEKAGAVEVPGDCVPTEGDYHFRICTVSEHGRSPHVVFNGSAHLVPTARLVSGLEDVQVYDGEDAVFSLDLSAIIQGSWFLNGEQLQSNEPEGQVEPGALRYRIEQKGLQHRLILQAVKHRDSGALVGFSCPGVQDSAALTIQESSVHILSPQDKVSLTFTTSERVVLTCELSRVDFPATWYKDGQKVEESESLIVKTEGRKHRLILPEAQVRDSGEFECRTEGVSAFFGVTVQDPPVHIVNPQEHVFVHAITSECVRLTCEVDREDTTVHWYKDGQEVEESDIIVLENKGPHHRLVLPAARPSDGGEFQCVAGDERAYFTVTITDVFSWIVYPSSEVHVAAVRLERVVLTCELCRPWAEVRWTKDGEEVVESPALLLEKEDTIRRLVLPSVQLEDSGEYLCEIHDESASFTITVTEPPVRIIYPQDEVTLHAVSLECVVLTCELSREDAPVRWYKDGLEVEESEALVLQSDGPRRRLVLPAAQPEDGGEFVCDAGDDSAFFTVTVTAPPERIVHPAARSLDLQFGAPGHVELRCEVAPAGSQVRWYKDGLEVEVSDALQLGAEGPARTLTLPHAQPEDAGEYVCETRDEAVTFNVSLAELPVQFLAPEAAPNPLCVVPGEPVVLSCELSRASAQVFWSHNGSPVQQGEGLELRAEGPRRILCIQAADLAHTGVYTCQSGASPGAPSLSFNVQVAELPPVKLVSELTPLTVHEGDDATFQCEVSPPDAEVTWLRNGAVITAGPQLEMVQNGSSRTLIIRGCQLKDAGTVTARAGAADTSARLHVRETELLFLRRLQDVRAEEGQDVHLEVETGRVGAAGTVRWIRGGEPLPLDSRLTTAQDGHVHRLSIHGVLLTDQGTYGCESRHDRTLARLSVRPRQLRELRPLEDVTVHEGGSATFQLELSQEGVTGEWAQGGVRLHPGPKCHIQSEGRTHRLVLSGLGLADSGCVSFTADTLRCAARLTVREVPVTIVQGPQDLEVTEGDTATFECELSQTLADVIWEKDGQALSLSPRLRLQALGTRRLLLLRRCCSSDAGTYSCVVGTARSEPARLTVREREVSVLRELRSVSAREGDGATFECTVSETEITGRWELGGRALRPGGRVRIRQEGKKHILVLSELRTEDTGEVCFQAGPAQSLARLEVEALPLQMCRRPPREKTVLVNRRAVLEVTVSRPGGHVCWMREGVELCPGNKYETRRHGTTHSLVIHDVRPEDQGTYSCQAGQDSADTQLLVDGD.

S10 carries the post-translational modification Phosphoserine. 4 Ig-like domains span residues 12 to 100 (PCFL…AAVT), 128 to 225 (PKFL…ALLQ), 241 to 330 (PKPV…QTLS), and 339 to 425 (PRLR…ANVT). Residues 17–19 (FPR) form an interaction with TTN region. C33 and C84 are joined by a disulfide. The segment at 85 to 94 (RARNAAGEAY) is interaction with TTN. A disulfide bond links C149 and C209. Residues 227 to 249 (HQPRESPPQDPDENPKPVLEPLK) form a disordered region. Disulfide bonds link C267/C319 and C362/C412. The Fibronectin type-III domain maps to 517–615 (PPGPPVMVEM…FNGSAHLVPT (99 aa)). Ig-like domains are found at residues 720–800 (PQDK…FGVT), 804–891 (PPVH…FTVT), 902–982 (PSSE…FTIT), 986–1075 (PPVR…VTVT), 1078–1165 (PERI…FNVS), 1176–1261 (PEAA…FNVQ), 1266–1442 (PPVK…ARLS), 1536–1621 (PVTI…ARLT), 1625–1694 (REVS…EDTG), and 1702–1798 (PAQS…ADTQ). Intrachain disulfides connect C738-C788, C829-C879, C920-C970, C1011-C1061, C1103-C1153, C1195-C1245, C1289-C1430, and C1558-C1608.

As to quaternary structure, component of the 3M complex, composed of core components CUL7, CCDC8 and OBSL1. Interacts with CCDC8. Interacts with CUL7; the interaction is direct. Interacts with FBXW8. Interacts (via N-terminal Ig-like domain) with TTN/titin (via C-terminal Ig-like domain); the interaction is direct.

Its subcellular location is the cytoplasm. It localises to the perinuclear region. The protein resides in the golgi apparatus. In terms of biological role, core component of the 3M complex, a complex required to regulate microtubule dynamics and genome integrity. It is unclear how the 3M complex regulates microtubules, it could act by controlling the level of a microtubule stabilizer. Acts as a regulator of the Cul7-RING(FBXW8) ubiquitin-protein ligase, playing a critical role in the ubiquitin ligase pathway that regulates Golgi morphogenesis and dendrite patterning in brain. Required to localize CUL7 to the Golgi apparatus in neurons. The sequence is that of Obscurin-like protein 1 (Obsl1) from Mus musculus (Mouse).